A 163-amino-acid polypeptide reads, in one-letter code: Late embryogenesis abundant protein Dc3 (163 aa).

2 disordered regions span residues 1-117 (MASH…GGLM) and 139-163 (FGMA…ARTE). 3 stretches are compositionally biased toward basic and acidic residues: residues 28–56 (TMKD…ESKD), 67–84 (GAVK…KEKT), and 91–113 (TKEK…KEKT). A run of 6 repeats spans residues 32-42 (KAQAAKDKASE), 43-53 (MAGSARDRTVE), 65-75 (KAGAVKDKTCE), 76-86 (TAQAAKEKTGG), 87-97 (AMQATKEKASE), and 103-115 (KETA…KTGG). Residues 32 to 115 (KAQAAKDKAS…AVAGKEKTGG (84 aa)) are 6 X 11 AA approximate repeats. The span at 152–163 (TTRVTRSSARTE) shows a compositional bias: low complexity.

This sequence belongs to the LEA type 4 family.

The polypeptide is Late embryogenesis abundant protein Dc3 (Daucus carota (Wild carrot)).